The chain runs to 276 residues: NH(3)-dependent NAD(+) synthetase (276 aa).

43 to 50 (GISGGVDS) contributes to the ATP binding site. Aspartate 49 is a Mg(2+) binding site. Residue arginine 146 coordinates deamido-NAD(+). An ATP-binding site is contributed by threonine 166. A Mg(2+)-binding site is contributed by glutamate 171. Residues lysine 179 and aspartate 186 each coordinate deamido-NAD(+). Lysine 195 and threonine 217 together coordinate ATP. 266 to 267 (HK) is a deamido-NAD(+) binding site.

It belongs to the NAD synthetase family. As to quaternary structure, homodimer.

It carries out the reaction deamido-NAD(+) + NH4(+) + ATP = AMP + diphosphate + NAD(+) + H(+). The protein operates within cofactor biosynthesis; NAD(+) biosynthesis; NAD(+) from deamido-NAD(+) (ammonia route): step 1/1. Functionally, catalyzes the ATP-dependent amidation of deamido-NAD to form NAD. Uses ammonia as a nitrogen source. The protein is NH(3)-dependent NAD(+) synthetase of Vibrio vulnificus (strain YJ016).